Consider the following 363-residue polypeptide: Wortmanamides biosynthesis cluster protein C (363 aa).

A run of 7 helical transmembrane segments spans residues 15–35 (FVTLLIFTPLGIVVTALRFVA), 48–68 (WLAVIATIFFILTNLAGLMAI), 95–115 (IAGLFFYFAQTLSVKLSILAF), 129–149 (ICIYLLAAAQTILFIAFCIFQ), 175–195 (ILGGELPNSLVDFAMVILAMI), 210–230 (VTVLFGLGFVVGIIGFVKIAV), and 237–257 (LYAFSMIALWTGVQMFTALLC). Positions 293–312 (SSSKNSRKHGPYDSDQSPGP) are disordered. Residue Asn-321 is glycosylated (N-linked (GlcNAc...) asparagine). Residues 344 to 363 (SPITHPQAYSKQTTRQFDVV) form a disordered region.

The protein belongs to the SAT4 family.

The protein localises to the membrane. Its pathway is secondary metabolite biosynthesis. Functionally, part of the gene cluster that mediates the biosynthesis of wortmanamides A and B, reduced long-chain polyketides amidated with a specific omega-amino acid, 5-aminopentanoic acid (5PA). The PKS modules of TwmB are involved in the synthesis of the polyketide backbone, whereas the non-canonical C domain of TwmB is a bonafide condensation domain that specifically selects 5PA and catalyzes amidation to release polyketide chain. The C domain clearly prefers C16 and C18 fatty acyl substrates, which is consistent with simultaneous formation of both octaketide and nonaketide acyl amides wortmanamides A and B. Because TwmB lacks a designated enoylreductase (ER) domain, the required activity is provided the enoyl reductase TwmE. The roles of the remaining enzymes have still to be clarified. This Talaromyces wortmannii (Penicillium wortmannii) protein is Wortmanamides biosynthesis cluster protein C.